A 92-amino-acid polypeptide reads, in one-letter code: N(2)-fixation sustaining protein CowN (92 aa).

Belongs to the CowN family.

Functionally, is required to sustain N(2)-dependent growth in the presence of low levels of carbon monoxide (CO). Probably acts by protecting the N(2) fixation ability of the nitrogenase complex, which is inactivated in the presence of CO. The sequence is that of N(2)-fixation sustaining protein CowN from Rhodopseudomonas palustris (strain HaA2).